A 186-amino-acid polypeptide reads, in one-letter code: ATP synthase subunit delta (186 aa).

Belongs to the ATPase delta chain family. In terms of assembly, F-type ATPases have 2 components, F(1) - the catalytic core - and F(0) - the membrane proton channel. F(1) has five subunits: alpha(3), beta(3), gamma(1), delta(1), epsilon(1). F(0) has three main subunits: a(1), b(2) and c(10-14). The alpha and beta chains form an alternating ring which encloses part of the gamma chain. F(1) is attached to F(0) by a central stalk formed by the gamma and epsilon chains, while a peripheral stalk is formed by the delta and b chains.

It is found in the cell inner membrane. F(1)F(0) ATP synthase produces ATP from ADP in the presence of a proton or sodium gradient. F-type ATPases consist of two structural domains, F(1) containing the extramembraneous catalytic core and F(0) containing the membrane proton channel, linked together by a central stalk and a peripheral stalk. During catalysis, ATP synthesis in the catalytic domain of F(1) is coupled via a rotary mechanism of the central stalk subunits to proton translocation. Functionally, this protein is part of the stalk that links CF(0) to CF(1). It either transmits conformational changes from CF(0) to CF(1) or is implicated in proton conduction. The chain is ATP synthase subunit delta from Leptospira borgpetersenii serovar Hardjo-bovis (strain JB197).